The chain runs to 138 residues: Holo-[acyl-carrier-protein] synthase (138 aa).

2 residues coordinate Mg(2+): Asp8 and Glu56.

It belongs to the P-Pant transferase superfamily. AcpS family. Mg(2+) is required as a cofactor.

The protein localises to the cytoplasm. The catalysed reaction is apo-[ACP] + CoA = holo-[ACP] + adenosine 3',5'-bisphosphate + H(+). Transfers the 4'-phosphopantetheine moiety from coenzyme A to a Ser of acyl-carrier-protein. This is Holo-[acyl-carrier-protein] synthase from Clostridium novyi (strain NT).